A 277-amino-acid chain; its full sequence is MELWLAAQAFILGVVEGLTEFLPISSTGHQIIIADLIGFGGDRAKAFNIIIQLGAILAVVWEFREKVFGVILGLPREPQAQRFTVNLLIAFLPAVVLGVAFADLIEHWLFNPITVASALVVGGLVMLWAERRQHVIEVHAVDEMNWRHALKIGCAQCLAMIPGTSRSGSTIIGGLLFGLSRKAATEFSFFLAMPTMVGAAAYSGYKHRALFENGGDLPVFALGFVVSFIFAMLAVRGLLRFIASHSYALFAWYRIGFGLLILLTWQLGVVDWSTAQG.

6 helical membrane passes run 53-73, 85-105, 108-128, 183-203, 215-235, and 250-270; these read LGAI…VILG, VNLL…ADLI, WLFN…VMLW, AATE…AAYS, GDLP…MLAV, and FAWY…LGVV.

It belongs to the UppP family.

The protein resides in the cell inner membrane. The enzyme catalyses di-trans,octa-cis-undecaprenyl diphosphate + H2O = di-trans,octa-cis-undecaprenyl phosphate + phosphate + H(+). Its function is as follows. Catalyzes the dephosphorylation of undecaprenyl diphosphate (UPP). Confers resistance to bacitracin. In Azotobacter vinelandii (strain DJ / ATCC BAA-1303), this protein is Undecaprenyl-diphosphatase.